A 113-amino-acid chain; its full sequence is U11-theraphotoxin-Hhn1a (113 aa).

A signal peptide spans M1–A21. A propeptide spanning residues D22 to R74 is cleaved from the precursor. Intrachain disulfides connect C75-C90, C82-C95, and C89-C110.

The protein belongs to the neurotoxin 14 (magi-1) family. 01 (HNTX-16) subfamily. In terms of tissue distribution, expressed by the venom gland.

Its subcellular location is the secreted. In terms of biological role, probable ion channel inhibitor. The protein is U11-theraphotoxin-Hhn1a of Cyriopagopus hainanus (Chinese bird spider).